Consider the following 743-residue polypeptide: 1,4-alpha-glucan branching enzyme GlgB (743 aa).

Asp416 (nucleophile) is an active-site residue. The Proton donor role is filled by Glu469.

This sequence belongs to the glycosyl hydrolase 13 family. GlgB subfamily. As to quaternary structure, monomer.

The enzyme catalyses Transfers a segment of a (1-&gt;4)-alpha-D-glucan chain to a primary hydroxy group in a similar glucan chain.. Its pathway is glycan biosynthesis; glycogen biosynthesis. In terms of biological role, catalyzes the formation of the alpha-1,6-glucosidic linkages in glycogen by scission of a 1,4-alpha-linked oligosaccharide from growing alpha-1,4-glucan chains and the subsequent attachment of the oligosaccharide to the alpha-1,6 position. This chain is 1,4-alpha-glucan branching enzyme GlgB, found in Shewanella baltica (strain OS223).